An 89-amino-acid polypeptide reads, in one-letter code: Cytochrome b (89 aa).

2 helical membrane-spanning segments follow: residues 38–58 and 82–89; these read FGPLAGICLVIQIVTGVFLAM and WLLRYMHA. His88 serves as a coordination point for heme b.

It belongs to the cytochrome b family. As to quaternary structure, the main subunits of complex b-c1 are: cytochrome b, cytochrome c1 and the Rieske protein. It depends on heme b as a cofactor.

The protein resides in the mitochondrion inner membrane. Its function is as follows. Component of the ubiquinol-cytochrome c reductase complex (complex III or cytochrome b-c1 complex) that is part of the mitochondrial respiratory chain. The b-c1 complex mediates electron transfer from ubiquinol to cytochrome c. Contributes to the generation of a proton gradient across the mitochondrial membrane that is then used for ATP synthesis. This chain is Cytochrome b (MT-CYB), found in Brassica napus (Rape).